The following is a 427-amino-acid chain: C4-dicarboxylate transport protein (427 aa).

9 helical membrane passes run 5-25 (IFSS…FLGH), 44-64 (LIKM…IAGM), 76-96 (IALL…LCVV), 142-162 (IGAF…LFGF), 184-206 (VIFG…AMAF), 222-242 (LIAC…GSIA), 307-327 (IYLT…LDLF), 330-350 (ITLL…TGSG), and 352-372 (IVLA…LALI).

It belongs to the dicarboxylate/amino acid:cation symporter (DAACS) (TC 2.A.23) family.

The protein localises to the cell inner membrane. Its function is as follows. Responsible for the transport of dicarboxylates such as succinate, fumarate, and malate from the periplasm across the membrane. The polypeptide is C4-dicarboxylate transport protein (Aeromonas salmonicida (strain A449)).